Consider the following 299-residue polypeptide: Recombination-associated protein RdgC (299 aa).

Belongs to the RdgC family.

Its subcellular location is the cytoplasm. It is found in the nucleoid. Functionally, may be involved in recombination. The sequence is that of Recombination-associated protein RdgC from Cupriavidus pinatubonensis (strain JMP 134 / LMG 1197) (Cupriavidus necator (strain JMP 134)).